The primary structure comprises 46 residues: L-amino-acid oxidase (46 aa).

Residue N31 is glycosylated (N-linked (GlcNAc...) asparagine).

The protein belongs to the flavin monoamine oxidase family. FIG1 subfamily. FAD serves as cofactor.

The protein resides in the secreted. It localises to the lysosome. Its subcellular location is the cytoplasmic vesicle. It is found in the secretory vesicle. The protein localises to the acrosome. It carries out the reaction an L-alpha-amino acid + O2 + H2O = a 2-oxocarboxylate + H2O2 + NH4(+). It catalyses the reaction L-tryptophan + O2 + H2O = indole-3-pyruvate + H2O2 + NH4(+). The enzyme catalyses L-phenylalanine + O2 + H2O = 3-phenylpyruvate + H2O2 + NH4(+). The catalysed reaction is L-tyrosine + O2 + H2O = 3-(4-hydroxyphenyl)pyruvate + H2O2 + NH4(+). It carries out the reaction L-arginine + O2 + H2O = 5-guanidino-2-oxopentanoate + H2O2 + NH4(+). The protein operates within amino-acid degradation; L-tryptophan degradation via pyruvate pathway. In terms of biological role, secreted L-amino-acid oxidase that acts as a key immunoregulator. Has preference for L-aromatic amino acids: converts phenylalanine (Phe), tyrosine (Tyr) and tryptophan (Trp) to phenylpyruvic acid (PP), hydroxyphenylpyruvic acid (HPP), and indole-3-pyruvic acid (I3P), respectively. Also has weak L-arginine oxidase activity. Acts as a negative regulator of anti-tumor immunity by mediating Trp degradation via an indole pyruvate pathway that activates the transcription factor AHR. IL4I1-mediated Trp catabolism generates I3P, giving rise to indole metabolites (indole-3-acetic acid (IAA) and indole-3-aldehyde (I3A)) and kynurenic acid, which act as ligands for AHR, a ligand-activated transcription factor that plays important roles in immunity and cancer. AHR activation by indoles following IL4I1-mediated Trp degradation enhances tumor progression by promoting cancer cell motility and suppressing adaptive immunity. Also has an immunoregulatory function in some immune cells, probably by mediating Trp degradation and promoting downstream AHR activation: inhibits T-cell activation and proliferation, promotes the differentiation of naive CD4(+) T-cells into FOXP3(+) regulatory T-cells (Treg) and regulates the development and function of B-cells. Also regulates M2 macrophage polarization by inhibiting T-cell activation. Also has antibacterial properties by inhibiting growth of Gram negative and Gram positive bacteria through the production of NH4(+) and H2O2. The chain is L-amino-acid oxidase from Mus spretus (Western Mediterranean mouse).